Here is a 420-residue protein sequence, read N- to C-terminus: Serine hydroxymethyltransferase (420 aa).

Residues leucine 121 and 125 to 127 (GHL) each bind (6S)-5,6,7,8-tetrahydrofolate. An N6-(pyridoxal phosphate)lysine modification is found at lysine 230. 355–357 (SPF) serves as a coordination point for (6S)-5,6,7,8-tetrahydrofolate.

The protein belongs to the SHMT family. In terms of assembly, homodimer. It depends on pyridoxal 5'-phosphate as a cofactor.

The protein localises to the cytoplasm. The catalysed reaction is (6R)-5,10-methylene-5,6,7,8-tetrahydrofolate + glycine + H2O = (6S)-5,6,7,8-tetrahydrofolate + L-serine. It functions in the pathway one-carbon metabolism; tetrahydrofolate interconversion. The protein operates within amino-acid biosynthesis; glycine biosynthesis; glycine from L-serine: step 1/1. Its function is as follows. Catalyzes the reversible interconversion of serine and glycine with tetrahydrofolate (THF) serving as the one-carbon carrier. This reaction serves as the major source of one-carbon groups required for the biosynthesis of purines, thymidylate, methionine, and other important biomolecules. Also exhibits THF-independent aldolase activity toward beta-hydroxyamino acids, producing glycine and aldehydes, via a retro-aldol mechanism. The protein is Serine hydroxymethyltransferase of Streptococcus gordonii (strain Challis / ATCC 35105 / BCRC 15272 / CH1 / DL1 / V288).